A 910-amino-acid polypeptide reads, in one-letter code: Putative disease resistance protein At1g58400 (910 aa).

Residues 15–57 adopt a coiled-coil conformation; sequence DRLTQEYEQFQGVEDRIAELKSNLNLLKSFLKDAEAKKNTSQM. Residues 148–460 form the NB-ARC domain; that stretch reads REREMRQTFS…AEGILEPRHY (313 aa). Residue 191–198 coordinates ATP; it reads GMGGLGKT. 2 LRR repeats span residues 580–604 and 605–628; these read LELL…GIGK and LIHL…LGNL.

The protein belongs to the disease resistance NB-LRR family.

Its function is as follows. Potential disease resistance protein. In Arabidopsis thaliana (Mouse-ear cress), this protein is Putative disease resistance protein At1g58400.